Reading from the N-terminus, the 660-residue chain is Putative ABC transporter ATP-binding MG390 (660 aa).

The Peptidase C39 domain occupies 6–126 (QEQQNECGIC…KLWTGYAATV (121 aa)). The active site involves Cys-12. The next 6 helical transmembrane spans lie at 150–170 (LVTF…LLAT), 188–208 (LVVL…LQVI), 265–285 (YIPN…LIGI), 290–310 (FLLI…YDFF), 379–399 (SFFQ…GIIE), and 402–422 (YQLS…TYAT). Residues 464 to 657 (ISLENLSVTL…QNKINLTNYL (194 aa)) enclose the ABC transporter domain. Residue 494-501 (GQNGSGKS) coordinates ATP.

Belongs to the ABC transporter superfamily.

The protein localises to the cell membrane. This Mycoplasma genitalium (strain ATCC 33530 / DSM 19775 / NCTC 10195 / G37) (Mycoplasmoides genitalium) protein is Putative ABC transporter ATP-binding MG390.